The sequence spans 317 residues: MPVQGSPRSLLGAVNSTPTATPHLRPAANQTGPQCLEVSIPDGLFLCLGLVSLVENTLVVAAIAKNRNLHSPMYCFVCCLALSDLLVSVSSVLETAVLLLLGAGALAAQATVVQLLGNVIDVLLCSSMVSSLFFLGAIAMDRYISIFYALRYHSIVTLARARRAIAAIWAASMLSSTLFIAYCDHTAALLCLVVFFLAMLVLMAVLYVHMLTQACQHAQGIARLHKRQRPVQQGWGLKGAATLAILLGVFFLCWGPFFLHLTLIAVCPQHPTCSCIFKNFRLFLALIVCNAIVDPLIYAFRSQELCKTLKELLLFSW.

The segment at 1–26 (MPVQGSPRSLLGAVNSTPTATPHLRP) is disordered. Over 1-37 (MPVQGSPRSLLGAVNSTPTATPHLRPAANQTGPQCLE) the chain is Extracellular. Residue N29 is glycosylated (N-linked (GlcNAc...) asparagine). A helical transmembrane segment spans residues 38–63 (VSIPDGLFLCLGLVSLVENTLVVAAI). Over 64-72 (AKNRNLHSP) the chain is Cytoplasmic. A helical transmembrane segment spans residues 73 to 93 (MYCFVCCLALSDLLVSVSSVL). The Extracellular segment spans residues 94–118 (ETAVLLLLGAGALAAQATVVQLLGN). The helical transmembrane segment at 119 to 140 (VIDVLLCSSMVSSLFFLGAIAM) threads the bilayer. The Cytoplasmic segment spans residues 141–163 (DRYISIFYALRYHSIVTLARARR). A helical transmembrane segment spans residues 164–183 (AIAAIWAASMLSSTLFIAYC). The Extracellular segment spans residues 184–191 (DHTAALLC). A helical transmembrane segment spans residues 192 to 211 (LVVFFLAMLVLMAVLYVHML). Topologically, residues 212-240 (TQACQHAQGIARLHKRQRPVQQGWGLKGA) are cytoplasmic. Residues 241–266 (ATLAILLGVFFLCWGPFFLHLTLIAV) traverse the membrane as a helical segment. Topologically, residues 267–279 (CPQHPTCSCIFKN) are extracellular. Residues 280–300 (FRLFLALIVCNAIVDPLIYAF) form a helical membrane-spanning segment. At 301-317 (RSQELCKTLKELLLFSW) the chain is on the cytoplasmic side.

The protein belongs to the G-protein coupled receptor 1 family. In terms of assembly, interacts with MGRN1, but does not undergo MGRN1-mediated ubiquitination; this interaction competes with GNAS-binding and thus inhibits agonist-induced cAMP production. Interacts with OPN3; the interaction results in a decrease in MC1R-mediated cAMP signaling and ultimately a decrease in melanin production in melanocytes.

The protein resides in the cell membrane. Functionally, receptor for MSH (alpha, beta and gamma) and ACTH. The activity of this receptor is mediated by G proteins which activate adenylate cyclase. Mediates melanogenesis, the production of eumelanin (black/brown) and phaeomelanin (red/yellow), via regulation of cAMP signaling in melanocytes. This is Melanocyte-stimulating hormone receptor (MC1R) from Hapalemur griseus (Gray gentle lemur).